The sequence spans 319 residues: Putative olfactory receptor 52L2 (319 aa).

Residues 1 to 43 (MNLDSFFSFLLKSLIMALSNSSWRLPQPSFFLVGIPGLEESQH) are Extracellular-facing. Asn-20 carries N-linked (GlcNAc...) asparagine glycosylation. Residues 44-64 (WIALPLGILYLLALVGNVTIL) traverse the membrane as a helical segment. Over 65 to 72 (FIIWMDPS) the chain is Cytoplasmic. The helical transmembrane segment at 73 to 93 (LHQSMYLFLSMLAAIDLVVAS) threads the bilayer. The Extracellular segment spans residues 94 to 117 (STAPKALAVLLVRAQEIGYTVCLI). Cys-115 and Cys-207 are disulfide-bonded. The helical transmembrane segment at 118 to 138 (QMFFTHAFSSMESGVLVAMAL) threads the bilayer. Residues 139–157 (DRYVAICHPLHHSTILHPG) lie on the Cytoplasmic side of the membrane. Residues 158–178 (VIGHIGMVVLVRGLLLLIPFL) form a helical membrane-spanning segment. Residues 179 to 214 (ILLRKLIFCQATIIGHAYCEHMAVVKLACSETTVNR) are Extracellular-facing. The helical transmembrane segment at 215–235 (AYGLTVALLVVGLDVLAIGVS) threads the bilayer. The Cytoplasmic portion of the chain corresponds to 236–255 (YAHILQAVLKVPGNEARLKA). The chain crosses the membrane as a helical span at residues 256–276 (FSTCGSHVCVILVFYIPGMFS). The Extracellular portion of the chain corresponds to 277–291 (FLTHRFGHHVPHHVH). Residues 292–312 (VLLAILYRLVPPALNPLVYRV) form a helical membrane-spanning segment. Topologically, residues 313-319 (KTQKIHQ) are cytoplasmic.

The protein belongs to the G-protein coupled receptor 1 family.

Its subcellular location is the cell membrane. Its function is as follows. Odorant receptor. In Homo sapiens (Human), this protein is Putative olfactory receptor 52L2 (OR52L2P).